The following is a 311-amino-acid chain: Solute carrier family 25 member 48 (311 aa).

3 Solcar repeats span residues 3–86, 100–205, and 214–301; these read NFQL…TQRF, PHVL…LSDW, and PSPC…SLQA. The next 6 helical transmembrane spans lie at 9 to 29, 61 to 81, 107 to 127, 193 to 213, 217 to 237, and 277 to 295; these read FVAG…LDTV, GMSF…GVFS, LLAS…VDLI, CLYF…ACAG, CAVW…ATPM, and ITVN…FLGY.

It belongs to the mitochondrial carrier (TC 2.A.29) family.

It localises to the mitochondrion inner membrane. The sequence is that of Solute carrier family 25 member 48 (SLC25A48) from Bos taurus (Bovine).